A 356-amino-acid polypeptide reads, in one-letter code: Probable dual-specificity RNA methyltransferase RlmN (356 aa).

Glu97 (proton acceptor) is an active-site residue. A Radical SAM core domain is found at 103–333 (YHHGNSVCIS…VTIRREMGSD (231 aa)). A disulfide bridge links Cys110 with Cys338. 3 residues coordinate [4Fe-4S] cluster: Cys117, Cys121, and Cys124. Residues 164–165 (GE), Ser196, 219–221 (SLH), and Asn295 each bind S-adenosyl-L-methionine. Cys338 (S-methylcysteine intermediate) is an active-site residue.

The protein belongs to the radical SAM superfamily. RlmN family. [4Fe-4S] cluster is required as a cofactor.

It is found in the cytoplasm. It carries out the reaction adenosine(2503) in 23S rRNA + 2 reduced [2Fe-2S]-[ferredoxin] + 2 S-adenosyl-L-methionine = 2-methyladenosine(2503) in 23S rRNA + 5'-deoxyadenosine + L-methionine + 2 oxidized [2Fe-2S]-[ferredoxin] + S-adenosyl-L-homocysteine. It catalyses the reaction adenosine(37) in tRNA + 2 reduced [2Fe-2S]-[ferredoxin] + 2 S-adenosyl-L-methionine = 2-methyladenosine(37) in tRNA + 5'-deoxyadenosine + L-methionine + 2 oxidized [2Fe-2S]-[ferredoxin] + S-adenosyl-L-homocysteine. Specifically methylates position 2 of adenine 2503 in 23S rRNA and position 2 of adenine 37 in tRNAs. The protein is Probable dual-specificity RNA methyltransferase RlmN of Lachnoclostridium phytofermentans (strain ATCC 700394 / DSM 18823 / ISDg) (Clostridium phytofermentans).